The chain runs to 256 residues: NAD-dependent protein deacylase 2 (256 aa).

The Deacetylase sirtuin-type domain maps to M1–R256. Residues G25 to Y44 and Q108 to D111 contribute to the NAD(+) site. The active-site Proton acceptor is the H128. Zn(2+) contacts are provided by C136, C139, C158, and C161. Residues G199 to T201, N225 to G227, and A243 each bind NAD(+).

Belongs to the sirtuin family. Class III subfamily. Zn(2+) serves as cofactor.

Its subcellular location is the cytoplasm. The enzyme catalyses N(6)-acetyl-L-lysyl-[protein] + NAD(+) + H2O = 2''-O-acetyl-ADP-D-ribose + nicotinamide + L-lysyl-[protein]. NAD-dependent protein deacetylase which modulates the activities of several proteins which are inactive in their acetylated form. The protein is NAD-dependent protein deacylase 2 (cobB2) of Pseudomonas aeruginosa (strain ATCC 15692 / DSM 22644 / CIP 104116 / JCM 14847 / LMG 12228 / 1C / PRS 101 / PAO1).